The sequence spans 415 residues: 6-phospho-beta-glucosidase BglT (415 aa).

NAD(+) is bound at residue 1-64; it reads MRIAVIGGGS…DRFKVLISDT (64 aa). Residues Arg87 and Asn140 each contribute to the substrate site. Residue Cys162 coordinates Mn(2+). Substrate is bound at residue Asn163. A Mn(2+)-binding site is contributed by His192. Tyr241 serves as the catalytic Proton acceptor. Arg261 contributes to the substrate binding site.

The protein belongs to the glycosyl hydrolase 4 family. As to quaternary structure, homodimer or homotetramer. Exists in a homodimer/homotetramer equilibrium state in solution. NAD(+) is required as a cofactor. It depends on Mn(2+) as a cofactor.

It carries out the reaction 6-phospho-beta-D-glucosyl-(1-&gt;4)-D-glucose + H2O = D-glucose 6-phosphate + D-glucose. Hydrolyzes cellobiose 6'-phosphate into glucose 6-phosphate (Glc6P) and glucose. In Thermotoga maritima (strain ATCC 43589 / DSM 3109 / JCM 10099 / NBRC 100826 / MSB8), this protein is 6-phospho-beta-glucosidase BglT (bglT).